Consider the following 210-residue polypeptide: Putative transmembrane protein DDB_G0267530 (210 aa).

The disordered stretch occupies residues 1–40 (MGVEDQPQTQPQTQPQQQPQMGYQPQMGYQPQAQMGYQPQ). Transmembrane regions (helical) follow at residues 119 to 139 (VIVFIIGFFFSIVWLGGFFFI) and 148 to 168 (TFGILSVVFFFLVLVIVVIVV).

It is found in the membrane. The protein is Putative transmembrane protein DDB_G0267530 of Dictyostelium discoideum (Social amoeba).